Reading from the N-terminus, the 610-residue chain is NTPase KAP family P-loop domain-containing protein 1 (610 aa).

A KAP NTPase domain is found at 1–414 (MQQEAAQRES…NTVPITVRLL (414 aa)). Transmembrane regions (helical) follow at residues 22 to 42 (AVSG…QPII), 118 to 138 (VCLG…LLYL), and 157 to 177 (VFGG…VYSV). The segment at 540–587 (ALKPPSPPKSPTRDTPHAAHRANSASRAPPSGRASGQAGEGHHTGDLA) is disordered. The segment covering 560 to 575 (RANSASRAPPSGRASG) has biased composition (low complexity).

It is found in the membrane. In Homo sapiens (Human), this protein is NTPase KAP family P-loop domain-containing protein 1 (NKPD1).